The sequence spans 684 residues: Acetophenone carboxylase delta subunit (684 aa).

It belongs to the oxoprolinase family. Acetophenone carboxylase consists of five subunits; a heterooctameric subcomplex of two alpha (Apc1), two beta (Apc2), two gamma (Apc3) and two delta (Apc4) subunits assembles with the epsilon (Apc5) subunit in an unknown stoichiometry. Requires Mg(2+) as cofactor. Mn(2+) serves as cofactor.

The protein localises to the cytoplasm. It catalyses the reaction acetophenone + hydrogencarbonate + 2 ATP + H2O = 3-oxo-3-phenylpropanoate + 2 ADP + 2 phosphate + 2 H(+). Its activity is regulated as follows. Inhibited by zinc ions, carbamoylphosphate and beta,gamma-imido-ATP. Catalyzes the carboxylation of acetophenone to form 3-oxo-3-phenylpropanoate (benzoylacetate) in the anaerobic catabolism of ethylbenzene. Also carboxylates propiophenone at the same rate and 4-acetyl-pyridine at lower rates. The polypeptide is Acetophenone carboxylase delta subunit (apc4) (Aromatoleum aromaticum (strain DSM 19018 / LMG 30748 / EbN1) (Azoarcus sp. (strain EbN1))).